The following is a 276-amino-acid chain: Putative olfactory receptor 10J6 (276 aa).

Topologically, residues 1-25 (MRRKNLTEVTEFVFLGFSRFHKHHI) are extracellular. An N-linked (GlcNAc...) asparagine glycan is attached at N5. A helical membrane pass occupies residues 26–46 (TLFVVFLILYTLTVAGNAIIM). At 47 to 54 (TIICIDRH) the chain is on the cytoplasmic side. Residues 55 to 75 (LHTPMYFFLSMLASSKTVYTL) traverse the membrane as a helical segment. The Extracellular portion of the chain corresponds to 76-99 (FIIPQMLSSFVTQTQPISLAGCTT). C97 and C188 are disulfide-bonded. A helical transmembrane segment spans residues 100 to 120 (QTFFFVTLAINNCFLLTVMGY). Over 121–139 (DHYMAICNPLRYRVITSKK) the chain is Cytoplasmic. The helical transmembrane segment at 140–160 (VCVQLVCGAFSIGLAMAAVQV) threads the bilayer. Over 161-196 (TSIFTLPFCHTVVGHFFCDILPVMKLSCINTTINEI) the chain is Extracellular. N190 is a glycosylation site (N-linked (GlcNAc...) asparagine). Residues 197 to 216 (INFVVRLFVILVPMGLVFIS) traverse the membrane as a helical segment. At 217–236 (YVLIISTVLKIASAEGWKKT) the chain is on the cytoplasmic side. Residues 237 to 257 (FATCAFHLTVVIVHYGCASIA) form a helical membrane-spanning segment. At 258-270 (YLMPKSENSIEQD) the chain is on the extracellular side. A helical membrane pass occupies residues 271–276 (LLLSVT).

The protein belongs to the G-protein coupled receptor 1 family.

The protein localises to the cell membrane. Functionally, odorant receptor. This Homo sapiens (Human) protein is Putative olfactory receptor 10J6 (OR10J6P).